The following is a 274-amino-acid chain: Adenosylcobinamide-GDP ribazoletransferase (274 aa).

The next 7 helical transmembrane spans lie at 46-66, 69-89, 117-137, 151-173, 192-212, 216-236, and 253-273; these read VMASVPFIGIVLGIVGGAIAF, TSLGVASIVAATVIVCFWELF, IIADPATGLIGMGACLISILI, WWMVMITPMIGRFCAIFGAHSRL, HTIIAWLCVLLVICIGVPLAM, ELITITILGLLCSVTLALVEI, and FIMHSATALCALVFAVGVGIV.

Belongs to the CobS family. It depends on Mg(2+) as a cofactor.

The protein localises to the cell membrane. The enzyme catalyses alpha-ribazole + adenosylcob(III)inamide-GDP = adenosylcob(III)alamin + GMP + H(+). It catalyses the reaction alpha-ribazole 5'-phosphate + adenosylcob(III)inamide-GDP = adenosylcob(III)alamin 5'-phosphate + GMP + H(+). The protein operates within cofactor biosynthesis; adenosylcobalamin biosynthesis; adenosylcobalamin from cob(II)yrinate a,c-diamide: step 7/7. Joins adenosylcobinamide-GDP and alpha-ribazole to generate adenosylcobalamin (Ado-cobalamin). Also synthesizes adenosylcobalamin 5'-phosphate from adenosylcobinamide-GDP and alpha-ribazole 5'-phosphate. This chain is Adenosylcobinamide-GDP ribazoletransferase, found in Corynebacterium diphtheriae (strain ATCC 700971 / NCTC 13129 / Biotype gravis).